A 438-amino-acid polypeptide reads, in one-letter code: Na(+)/H(+) antiporter NhaA (438 aa).

11 helical membrane-spanning segments follow: residues 23 to 43, 62 to 82, 104 to 124, 133 to 153, 162 to 182, 185 to 205, 221 to 241, 302 to 322, 337 to 357, 372 to 392, and 410 to 430; these read FGGI…NSFL, FFIG…LFFL, SFPV…YFFL, GFGI…MLLG, VFLI…IALF, TNLK…LALL, VLLW…AVVL, FLAP…NAGV, FGVI…ITFI, WWHI…SMFI, and IAIL…LFAL.

The protein belongs to the NhaA Na(+)/H(+) (TC 2.A.33) antiporter family.

Its subcellular location is the cell inner membrane. It carries out the reaction Na(+)(in) + 2 H(+)(out) = Na(+)(out) + 2 H(+)(in). Na(+)/H(+) antiporter that extrudes sodium in exchange for external protons. The sequence is that of Na(+)/H(+) antiporter NhaA from Helicobacter pylori (strain P12).